A 1764-amino-acid polypeptide reads, in one-letter code: Cilia- and flagella-associated protein 44 (1764 aa).

WD repeat units follow at residues Gly115 to Arg157, Ala160 to Lys199, Gly208 to Thr248, Cys255 to Pro294, His361 to Glu400, Ala454 to Thr493, and Val495 to Leu534. The disordered stretch occupies residues Gln570–Leu654. Residues Lys575–Gly584 are compositionally biased toward basic residues. Composition is skewed to basic and acidic residues over residues Lys585–Gly596 and Gly604–Ala628. A compositionally biased stretch (acidic residues) spans Glu629–Asp641. 3 WD repeats span residues Ser649–Ala692, Ala707–Met752, and Gln753–Pro791. Residues Tyr821–Leu850 adopt a coiled-coil conformation. Disordered stretches follow at residues Ala972 to Ala1003 and Lys1426 to Gly1468. The segment covering Gly1434–Glu1462 has biased composition (acidic residues). Coiled-coil stretches lie at residues Asp1479–Gln1517, Leu1567–Ile1674, and Glu1729–Lys1758.

It belongs to the CFAP44 family.

Its subcellular location is the cell projection. It is found in the cilium. The protein resides in the flagellum. It localises to the cytoplasm. The protein localises to the cytoskeleton. Its subcellular location is the flagellum axoneme. Flagellar protein involved in sperm flagellum axoneme organization and function. This is Cilia- and flagella-associated protein 44 from Chlamydomonas reinhardtii (Chlamydomonas smithii).